Consider the following 293-residue polypeptide: 4-hydroxy-tetrahydrodipicolinate synthase (293 aa).

Residue Thr-45 coordinates pyruvate. Residue Tyr-133 is the Proton donor/acceptor of the active site. Residue Lys-161 is the Schiff-base intermediate with substrate of the active site. Position 203 (Ile-203) interacts with pyruvate.

It belongs to the DapA family. Homotetramer; dimer of dimers.

The protein localises to the cytoplasm. It carries out the reaction L-aspartate 4-semialdehyde + pyruvate = (2S,4S)-4-hydroxy-2,3,4,5-tetrahydrodipicolinate + H2O + H(+). The protein operates within amino-acid biosynthesis; L-lysine biosynthesis via DAP pathway; (S)-tetrahydrodipicolinate from L-aspartate: step 3/4. In terms of biological role, catalyzes the condensation of (S)-aspartate-beta-semialdehyde [(S)-ASA] and pyruvate to 4-hydroxy-tetrahydrodipicolinate (HTPA). This is 4-hydroxy-tetrahydrodipicolinate synthase from Aliivibrio fischeri (strain ATCC 700601 / ES114) (Vibrio fischeri).